The following is a 132-amino-acid chain: Large ribosomal subunit protein bL20c (132 aa).

Belongs to the bacterial ribosomal protein bL20 family.

Its subcellular location is the plastid. The protein localises to the chloroplast. In terms of biological role, binds directly to 23S ribosomal RNA and is necessary for the in vitro assembly process of the 50S ribosomal subunit. It is not involved in the protein synthesizing functions of that subunit. In Coffea arabica (Arabian coffee), this protein is Large ribosomal subunit protein bL20c.